The chain runs to 193 residues: MMKNMARKNQKAPWEEEEEIIWVSRTELKNDMLALQKLGEELVELKPSALAKFPLPEDLAEAIKDAQRFKNEARRRQLQYIGKLMRHIDPEPLQAALDKLRNKHSQTTALLHKLEQLRDRIVAEGDSAIEVAMEQYPEADRQRLRLLARQASKEKAGNKPPKSSREIFQLLKEAMLAKQEIEEESEDDLDSAE.

This sequence belongs to the DarP family.

The protein localises to the cytoplasm. Its function is as follows. Member of a network of 50S ribosomal subunit biogenesis factors which assembles along the 30S-50S interface, preventing incorrect 23S rRNA structures from forming. Promotes peptidyl transferase center (PTC) maturation. This Vibrio cholerae serotype O1 (strain ATCC 39315 / El Tor Inaba N16961) protein is Dual-action ribosomal maturation protein DarP.